The following is a 365-amino-acid chain: MNQQGTVIVTGANGGLGNAIVSHILDRQDLNTNYYGIYTVRDTVRGARTVLRTLEWAKSVKHSHELLAIDLGSLDSVRRAARDINSRVANGTIPPIRALILNAGWGEQTTHSFTNDGFDMSFQVNYLSHFLLTLLLLQSMDKKHGRIEVLGSWTHEYLIPGVSTCSTTDPNNKKGPSASMYTPKRYQQIFNYPINTEDLAKGKWSSEREHPGDLNAGLRRYGAAKLCEIMMFRELSNRIEKDPELSAISVVAVDPGAMPSELNRRSIWVMFLLMKFVLPLLAPLAVWLQPNGTIRTTTKSARDVVRAAFDTATLGDHPNGIYLNGSEIADVGPEAKDAEKSRTLWHDSLVYARLEKGDTILKAWE.

The NADP(+) site is built by Leu16, Arg52, and Asp70. Asn90 carries N-linked (GlcNAc...) asparagine glycosylation. Residues Asn102, Tyr221, Lys225, and Ser260 each coordinate NADP(+). Tyr221 acts as the Proton donor in catalysis. Catalysis depends on Lys225, which acts as the Lowers pKa of active site Tyr. The helical transmembrane segment at 267 to 287 threads the bilayer; the sequence is IWVMFLLMKFVLPLLAPLAVW. Residues Asn291 and Asn324 are each glycosylated (N-linked (GlcNAc...) asparagine).

This sequence belongs to the short-chain dehydrogenases/reductases (SDR) family.

Its subcellular location is the membrane. It participates in mycotoxin biosynthesis. NADH-dependent flavin oxidoreductase; part of the gene cluster that mediates the biosynthesis of ilicicolin H, a 4-hydroxy-2-pyridonealkaloid that has potent and broad antifungal activities by inhibiting the mitochondrial respiration chain. IccA to iccE are sufficient for ilicicolin H biosynthesis and the roles of the remaining enzymes, iccF, iccG and iccH within the pathway have still to be determined. The biosynthesis of ilicicolin H starts with formation of the tetramic acid by the hybrid PKS-NRPS synthetase iccA with the partnering trans-enoyl reductase iccB since iccA lacks a designated enoylreductase (ER) domain. The cytochrome P450 monooxygenase iccC then catalyzes the ring expansion of the tetramate to the acyclic 2-pyridone. The pericyclase iccD further converts the acyclic 2-pyridone into 8-epi-ilicicolin H. Finally, the epimerase iccE converts 8-epi-ilicicolin H into ilicicolin H via epimerizationd. The chain is Short-chain dehydrogenase iccH from Talaromyces variabilis (Penicillium variabile).